The primary structure comprises 236 residues: Phospholipid hydroperoxide glutathione peroxidase, chloroplastic (236 aa).

Residues 1-64 constitute a chloroplast transit peptide; the sequence is MASMAFSTTF…SNFPIVPSKT (64 aa). Residue Cys111 is part of the active site.

It belongs to the glutathione peroxidase family.

It is found in the plastid. The protein resides in the chloroplast stroma. It carries out the reaction a hydroperoxy polyunsaturated fatty acid + 2 glutathione = a hydroxy polyunsaturated fatty acid + glutathione disulfide + H2O. Functionally, protects cells and enzymes from oxidative damage, by catalyzing the reduction of hydrogen peroxide, lipid peroxides and organic hydroperoxide, by glutathione. The chain is Phospholipid hydroperoxide glutathione peroxidase, chloroplastic from Pisum sativum (Garden pea).